Consider the following 284-residue polypeptide: Sulfotransferase 4A1 (284 aa).

Phosphothreonine is present on residues T8, T11, and T205.

Belongs to the sulfotransferase 1 family. In terms of tissue distribution, expressed in brain, cerebellum and hypothalamus. Not detected in pancreas, liver, lung, intestine, kidney, uterus, adrenal gland, thymus, spleen, epididymis, testicle, and heart.

The protein resides in the cytoplasm. In terms of biological role, atypical sulfotransferase family member with very low affinity for 3'-phospho-5'-adenylyl sulfate (PAPS) and very low catalytic activity towards L-triiodothyronine, thyroxine, estrone, p-nitrophenol, 2-naphthylamine, and 2-beta-naphthol. May have a role in the metabolism of drugs and neurotransmitters in the CNS. This chain is Sulfotransferase 4A1 (Sult4a1), found in Mus musculus (Mouse).